Here is a 124-residue protein sequence, read N- to C-terminus: Late histone H2A.2.1 (124 aa).

Residues M1–S18 show a composition bias toward basic residues. Positions M1 to A21 are disordered. Residue S2 is modified to N-acetylserine. S2 is subject to Phosphoserine. At Q104 the chain carries N5-methylglutamine. A Glycyl lysine isopeptide (Lys-Gly) (interchain with G-Cter in ubiquitin) cross-link involves residue K119.

This sequence belongs to the histone H2A family. As to quaternary structure, the nucleosome is a histone octamer containing two molecules each of H2A, H2B, H3 and H4 assembled in one H3-H4 heterotetramer and two H2A-H2B heterodimers. The octamer wraps approximately 147 bp of DNA. Post-translationally, monoubiquitination of Lys-119 gives a specific tag for epigenetic transcriptional repression. Phosphorylation of Ser-2 directly represses transcription.

The protein localises to the nucleus. It is found in the chromosome. In terms of biological role, core component of nucleosome. Nucleosomes wrap and compact DNA into chromatin, limiting DNA accessibility to the cellular machineries which require DNA as a template. Histones thereby play a central role in transcription regulation, DNA repair, DNA replication and chromosomal stability. DNA accessibility is regulated via a complex set of post-translational modifications of histones, also called histone code, and nucleosome remodeling. The chain is Late histone H2A.2.1 from Psammechinus miliaris (Green sea urchin).